The following is a 148-amino-acid chain: Transcription antitermination protein NusB (148 aa).

Belongs to the NusB family.

In terms of biological role, involved in transcription antitermination. Required for transcription of ribosomal RNA (rRNA) genes. Binds specifically to the boxA antiterminator sequence of the ribosomal RNA (rrn) operons. This Novosphingobium aromaticivorans (strain ATCC 700278 / DSM 12444 / CCUG 56034 / CIP 105152 / NBRC 16084 / F199) protein is Transcription antitermination protein NusB.